The primary structure comprises 246 residues: 1-(5-phosphoribosyl)-5-[(5-phosphoribosylamino)methylideneamino] imidazole-4-carboxamide isomerase (246 aa).

Asp10 (proton acceptor) is an active-site residue. Catalysis depends on Asp131, which acts as the Proton donor.

The protein belongs to the HisA/HisF family.

It is found in the cytoplasm. The enzyme catalyses 1-(5-phospho-beta-D-ribosyl)-5-[(5-phospho-beta-D-ribosylamino)methylideneamino]imidazole-4-carboxamide = 5-[(5-phospho-1-deoxy-D-ribulos-1-ylimino)methylamino]-1-(5-phospho-beta-D-ribosyl)imidazole-4-carboxamide. Its pathway is amino-acid biosynthesis; L-histidine biosynthesis; L-histidine from 5-phospho-alpha-D-ribose 1-diphosphate: step 4/9. This Acidiphilium cryptum (strain JF-5) protein is 1-(5-phosphoribosyl)-5-[(5-phosphoribosylamino)methylideneamino] imidazole-4-carboxamide isomerase.